We begin with the raw amino-acid sequence, 20 residues long: Venom protease (20 aa).

Belongs to the peptidase S1 family. In terms of processing, contains 3 disulfide bonds. N-glycosylated. Expressed by the venom duct.

The protein resides in the secreted. The chain is Venom protease from Bombus terrestris (Buff-tailed bumblebee).